We begin with the raw amino-acid sequence, 294 residues long: Probable 2-(5''-triphosphoribosyl)-3'-dephosphocoenzyme-A synthase (294 aa).

It belongs to the CitG/MdcB family.

The catalysed reaction is 3'-dephospho-CoA + ATP = 2'-(5''-triphospho-alpha-D-ribosyl)-3'-dephospho-CoA + adenine. The chain is Probable 2-(5''-triphosphoribosyl)-3'-dephosphocoenzyme-A synthase from Streptococcus pyogenes serotype M5 (strain Manfredo).